We begin with the raw amino-acid sequence, 337 residues long: Dehydrogenase FUB6 (337 aa).

The protein belongs to the zinc-containing alcohol dehydrogenase family. Quinone oxidoreductase subfamily.

Its pathway is mycotoxin biosynthesis. Dehydrogenase; part of the gene cluster that mediates the biosynthesis of fusaric acid, a mycotoxin with low to moderate toxicity to animals and humans, but with high phytotoxic properties. L-aspartate is suggested as fusaric acid amino acid precursor that is activated and further processed to O-acetyl-L-homoserine by cluster enzymes aspartate kinase FUB3 and homoserine O-acetyltransferase FUB5, as well as enzymes of the primary metabolism. The polyketide synthase (PKS) FUB1 generates the triketide trans-2-hexenal which is presumptively released by the hydrolase FUB4 and linked to the NRPS-bound amino acid precursor by NAD(P)-dependent dehydrogenase FUB6. FUB1, FUB4, and the non-canonical NRPS Fub8 may form an enzyme complex. Further processing of the NRPS-bound intermediate might be carried out by FUB6 and the O-acetylhomoserine FUB7, enabling a spontaneous electrocyclization to close the carbon backbone of fusaric acid. Dihydrofusaric acid is likely to be released via reduction by the thioester reductase (TR) domain of FUB8 whereupon the final oxidation to fusaric acid may (also) be performed by the FMN-dependent dehydrogenase FUB9. The protein is Dehydrogenase FUB6 of Gibberella fujikuroi (strain CBS 195.34 / IMI 58289 / NRRL A-6831) (Bakanae and foot rot disease fungus).